A 317-amino-acid chain; its full sequence is Melanocyte-stimulating hormone receptor (317 aa).

The span at 1-20 shows a compositional bias: polar residues; the sequence is MPVQGSQRSLLGAVNSTPTA. The disordered stretch occupies residues 1 to 23; it reads MPVQGSQRSLLGAVNSTPTATPH. Topologically, residues 1-37 are extracellular; it reads MPVQGSQRSLLGAVNSTPTATPHLRPAANQTGPQCLE. The N-linked (GlcNAc...) asparagine glycan is linked to asparagine 29. A helical membrane pass occupies residues 38 to 63; that stretch reads VSIPDGLFLCLGLVSLVENTLVVAAI. The Cytoplasmic portion of the chain corresponds to 64–72; that stretch reads AKNRNLHSP. A helical membrane pass occupies residues 73-93; that stretch reads MYCFICCLALSDLLVSVSSVL. Residues 94–118 lie on the Extracellular side of the membrane; sequence ETAVLLLLGAGALAAQATVVQQLGN. The chain crosses the membrane as a helical span at residues 119-140; sequence VIDVLLCSSMVSSLFFLGAIAM. Residues 141-163 lie on the Cytoplasmic side of the membrane; the sequence is DRYISIFYALRYHSIVTLARARR. A helical transmembrane segment spans residues 164–183; that stretch reads AIAAIWAASILSSTLFIAYC. Over 184–191 the chain is Extracellular; it reads DRTAALLC. A helical membrane pass occupies residues 192-211; it reads LVVFFLAMLVLMAVLYVHML. At 212–240 the chain is on the cytoplasmic side; that stretch reads TQARQHAQGIARLHKRQRPVQQGWGLKGA. A helical transmembrane segment spans residues 241 to 266; it reads ATLTILLGVFFLCWGPFFLHLTLIAV. At 267–279 the chain is on the extracellular side; that stretch reads CPQHPTCSCIFKN. The chain crosses the membrane as a helical span at residues 280 to 300; sequence FRLFLALIVCNAIVDPLIYAF. The Cytoplasmic portion of the chain corresponds to 301 to 317; it reads RSQELRKTLKEVLLFFW.

Belongs to the G-protein coupled receptor 1 family. Interacts with MGRN1, but does not undergo MGRN1-mediated ubiquitination; this interaction competes with GNAS-binding and thus inhibits agonist-induced cAMP production. Interacts with OPN3; the interaction results in a decrease in MC1R-mediated cAMP signaling and ultimately a decrease in melanin production in melanocytes.

It is found in the cell membrane. Its function is as follows. Receptor for MSH (alpha, beta and gamma) and ACTH. The activity of this receptor is mediated by G proteins which activate adenylate cyclase. Mediates melanogenesis, the production of eumelanin (black/brown) and phaeomelanin (red/yellow), via regulation of cAMP signaling in melanocytes. The sequence is that of Melanocyte-stimulating hormone receptor (MC1R) from Lemur catta (Ring-tailed lemur).